A 224-amino-acid polypeptide reads, in one-letter code: Probable septum site-determining protein MinC (224 aa).

Belongs to the MinC family. Interacts with MinD and FtsZ.

Cell division inhibitor that blocks the formation of polar Z ring septums. Rapidly oscillates between the poles of the cell to destabilize FtsZ filaments that have formed before they mature into polar Z rings. Prevents FtsZ polymerization. The sequence is that of Probable septum site-determining protein MinC from Shewanella amazonensis (strain ATCC BAA-1098 / SB2B).